Consider the following 481-residue polypeptide: Sulfate adenylyltransferase subunit 1 (481 aa).

One can recognise a tr-type G domain in the interval 22-236 (KDLLRFITCG…LLDSIRLDAD (215 aa)). Positions 31-38 (GSVDDGKS) are G1. Residue 31–38 (GSVDDGKS) coordinates GTP. Residues 89–93 (GITID) are G2. Residues 110–113 (DCPG) form a G3 region. Residues 110–114 (DCPGH) and 165–168 (NKMD) each bind GTP. The G4 stretch occupies residues 165–168 (NKMD). The tract at residues 202–204 (SAL) is G5.

It belongs to the TRAFAC class translation factor GTPase superfamily. Classic translation factor GTPase family. CysN/NodQ subfamily. Heterodimer composed of CysD, the smaller subunit, and CysN.

It carries out the reaction sulfate + ATP + H(+) = adenosine 5'-phosphosulfate + diphosphate. It functions in the pathway sulfur metabolism; hydrogen sulfide biosynthesis; sulfite from sulfate: step 1/3. Its function is as follows. With CysD forms the ATP sulfurylase (ATPS) that catalyzes the adenylation of sulfate producing adenosine 5'-phosphosulfate (APS) and diphosphate, the first enzymatic step in sulfur assimilation pathway. APS synthesis involves the formation of a high-energy phosphoric-sulfuric acid anhydride bond driven by GTP hydrolysis by CysN coupled to ATP hydrolysis by CysD. This is Sulfate adenylyltransferase subunit 1 from Laribacter hongkongensis (strain HLHK9).